The chain runs to 1232 residues: DNA topoisomerase 2 (1232 aa).

ATP-binding positions include N65, N94, 122–124 (SSN), 135–142 (GRHGYGAK), and 352–354 (QNK). In terms of domain architecture, Toprim spans 432 to 546 (RTLIVTEGDS…SLLNRNPGFI (115 aa)). E438, D515, and D517 together coordinate Mg(2+). The 417-residue stretch at 681-1097 (LAHAVDGLKP…APVQMWLDEL (417 aa)) folds into the Topo IIA-type catalytic domain. Catalysis depends on Y771, which acts as the O-(5'-phospho-DNA)-tyrosine intermediate. Positions 952–961 (SLTQRIYING) are interaction with DNA. Residues 1161-1184 (YVPPPPSKRPHVGQSVGGGGGGGS) form a disordered region. Residues 1175–1184 (SVGGGGGGGS) show a composition bias toward gly residues.

This sequence belongs to the type II topoisomerase family. In terms of assembly, homodimer. The cofactor is Mg(2+). Mn(2+) serves as cofactor. Ca(2+) is required as a cofactor.

It is found in the nucleus. The catalysed reaction is ATP-dependent breakage, passage and rejoining of double-stranded DNA.. Functionally, control of topological states of DNA by transient breakage and subsequent rejoining of DNA strands. Topoisomerase II makes double-strand breaks. This chain is DNA topoisomerase 2 (TOP2), found in Trypanosoma cruzi.